The chain runs to 239 residues: Sugar fermentation stimulation protein homolog (239 aa).

It belongs to the SfsA family.

The chain is Sugar fermentation stimulation protein homolog from Maridesulfovibrio salexigens (strain ATCC 14822 / DSM 2638 / NCIMB 8403 / VKM B-1763) (Desulfovibrio salexigens).